Here is a 360-residue protein sequence, read N- to C-terminus: Phospho-N-acetylmuramoyl-pentapeptide-transferase (360 aa).

A run of 10 helical transmembrane segments spans residues 21-41 (YVTF…LWWG), 74-94 (MGGL…GDLG), 97-117 (YVWV…IDDY), 134-154 (YILQ…SAGS), 168-188 (VMPQ…VGSS), 199-219 (GLAI…AYLS), 236-256 (SGEL…FLWF), 263-283 (VFMG…IAVL), 288-308 (ILLV…ILQV), and 338-358 (VIVR…ATLK).

This sequence belongs to the glycosyltransferase 4 family. MraY subfamily. Mg(2+) is required as a cofactor.

Its subcellular location is the cell inner membrane. It carries out the reaction UDP-N-acetyl-alpha-D-muramoyl-L-alanyl-gamma-D-glutamyl-meso-2,6-diaminopimeloyl-D-alanyl-D-alanine + di-trans,octa-cis-undecaprenyl phosphate = di-trans,octa-cis-undecaprenyl diphospho-N-acetyl-alpha-D-muramoyl-L-alanyl-D-glutamyl-meso-2,6-diaminopimeloyl-D-alanyl-D-alanine + UMP. It functions in the pathway cell wall biogenesis; peptidoglycan biosynthesis. In terms of biological role, catalyzes the initial step of the lipid cycle reactions in the biosynthesis of the cell wall peptidoglycan: transfers peptidoglycan precursor phospho-MurNAc-pentapeptide from UDP-MurNAc-pentapeptide onto the lipid carrier undecaprenyl phosphate, yielding undecaprenyl-pyrophosphoryl-MurNAc-pentapeptide, known as lipid I. The polypeptide is Phospho-N-acetylmuramoyl-pentapeptide-transferase (Shewanella loihica (strain ATCC BAA-1088 / PV-4)).